A 530-amino-acid chain; its full sequence is Arginine--tRNA ligase (530 aa).

The short motif at 113–123 (ANPTGPLHIGH) is the 'HIGH' region element.

The protein belongs to the class-I aminoacyl-tRNA synthetase family. Monomer.

It is found in the cytoplasm. The enzyme catalyses tRNA(Arg) + L-arginine + ATP = L-arginyl-tRNA(Arg) + AMP + diphosphate. The sequence is that of Arginine--tRNA ligase from Campylobacter jejuni subsp. jejuni serotype O:23/36 (strain 81-176).